The chain runs to 64 residues: Large ribosomal subunit protein bL35 (64 aa).

Belongs to the bacterial ribosomal protein bL35 family.

This chain is Large ribosomal subunit protein bL35, found in Wolinella succinogenes (strain ATCC 29543 / DSM 1740 / CCUG 13145 / JCM 31913 / LMG 7466 / NCTC 11488 / FDC 602W) (Vibrio succinogenes).